Reading from the N-terminus, the 1797-residue chain is Non-reducing polyketide synthase nscA (1797 aa).

The N-terminal acylcarrier protein transacylase domain (SAT) stretch occupies residues serine 17–histidine 256. One can recognise a Ketosynthase family 3 (KS3) domain in the interval serine 392–aspartate 825. Residues cysteine 565, histidine 700, and histidine 743 each act as for beta-ketoacyl synthase activity in the active site. A malonyl-CoA:ACP transacylase (MAT) domain region spans residues phenylalanine 931 to leucine 1251. Residues threonine 1318–proline 1637 are product template (PT) domain. The N-terminal hotdog fold stretch occupies residues histidine 1322–alanine 1458. A PKS/mFAS DH domain is found at histidine 1322–aspartate 1632. The active-site Proton acceptor; for dehydratase activity is histidine 1354. The C-terminal hotdog fold stretch occupies residues valine 1482–aspartate 1632. Aspartate 1543 acts as the Proton donor; for dehydratase activity in catalysis. Positions serine 1663–threonine 1686 are enriched in polar residues. The interval serine 1663 to glycine 1723 is disordered. Over residues serine 1698–proline 1709 the composition is skewed to low complexity. The Carrier domain occupies glutamate 1720–cysteine 1797. At serine 1757 the chain carries O-(pantetheine 4'-phosphoryl)serine.

Pantetheine 4'-phosphate serves as cofactor.

Its pathway is secondary metabolite biosynthesis. In terms of biological role, non-reducing polyketide synthase; part of the gene cluster that mediates the biosynthesis of neosartoricin B, a prenylated anthracenone that probably exhibits T-cell antiproliferative activity, suggestive of a physiological role as an immunosuppressive agent. The non-reducing polyketide synthase nscA probably synthesizes and cyclizes the decaketide backbone. The hydrolase nscB then mediates the product release through hydrolysis followed by spontaneous decarboxylation. The prenyltransferase nscD catalyzes the addition of the dimethylallyl group to the aromatic C5. The FAD-dependent monooxygenase nscC is then responsible for the stereospecific hydroxylation at C2. Neosartoricin B can be converted into two additional compounds neosartoricins C and D. Neosartoricin C is a spirocyclic compound that is cyclized through the attack of C3 hydroxyl on C14, followed by dehydration. On the other hand, neosartoricin D is a further cyclized compound in which attack of C2 on C14 in neosartoricin C results in the formation of the acetal-containing dioxabicyclo-octanone ring. Both of these compounds are novel and possibly represent related metabolites of the gene cluster. This chain is Non-reducing polyketide synthase nscA, found in Arthroderma gypseum (strain ATCC MYA-4604 / CBS 118893) (Microsporum gypseum).